A 558-amino-acid chain; its full sequence is N-acetylglucosamine-6-O-sulfatase (558 aa).

Serine 101 carries the post-translational modification 3-oxoalanine (Ser).

This sequence belongs to the sulfatase family. The conversion to 3-oxoalanine (also known as C-formylglycine, FGly), of a serine or cysteine residue in prokaryotes and of a cysteine residue in eukaryotes, is critical for catalytic activity.

Exosulfatase involved in the degradation of the glycosaminoglycan (GAG) heparan sulfate (HS). Catalyzes the hydrolysis of the 6-sulfate groups of the N-acetyl-D-glucosamine 6-sulfate units. GAG-specific sulfatases play a key role in the persistence of the major human gut symbiont B.thetaiotaomicron in the host gastrointestinal tract. In Bacteroides thetaiotaomicron (strain ATCC 29148 / DSM 2079 / JCM 5827 / CCUG 10774 / NCTC 10582 / VPI-5482 / E50), this protein is N-acetylglucosamine-6-O-sulfatase.